The following is a 260-amino-acid chain: Flap endonuclease Xni (260 aa).

Asp-104 serves as a coordination point for Mg(2+). A 5'-3' exonuclease domain is found at 160–249 (VSPQQLTDYW…LNGNLQQLRL (90 aa)). Leu-171, Ala-172, Pro-180, Val-182, and Ile-185 together coordinate K(+). Positions 184–189 (GIGPKS) are interaction with DNA.

This sequence belongs to the Xni family. Mg(2+) serves as cofactor. The cofactor is K(+).

Its function is as follows. Has flap endonuclease activity. During DNA replication, flap endonucleases cleave the 5'-overhanging flap structure that is generated by displacement synthesis when DNA polymerase encounters the 5'-end of a downstream Okazaki fragment. This chain is Flap endonuclease Xni, found in Pectobacterium carotovorum subsp. carotovorum (strain PC1).